The sequence spans 218 residues: MNIRNARPDDLMNMQHCNLLCLPENYQMKYYFYHGLSWPQLSYIAEDEDGKIVGYVLAKMEEDPDDVPHGHITSLAVKRSHRRLGLAQKLMDQASRAMIENFGAKYVSLHVRKSNRAALHLYSNTLNFQVSEVEPKYYADGEDAYAMKRDLSQMTDELRRQLVLKKNRYVVLGSEETQGGTLPDAGEACLPKNPTSKDSGSSDSTDVQDSSEDLDSIS.

Residues 1–58 (MNIRNARPDDLMNMQHCNLLCLPENYQMKYYFYHGLSWPQLSYIAEDEDGKIVGYVLA) are interaction with NAA15. In terms of domain architecture, N-acetyltransferase spans 1 to 152 (MNIRNARPDD…DAYAMKRDLS (152 aa)). Residues 175–218 (EETQGGTLPDAGEACLPKNPTSKDSGSSDSTDVQDSSEDLDSIS) are disordered. The segment covering 196-205 (SKDSGSSDST) has biased composition (low complexity). Acidic residues predominate over residues 209-218 (DSSEDLDSIS).

The protein belongs to the acetyltransferase family. ARD1 subfamily. In terms of assembly, component of the N-terminal acetyltransferase A (NatA) complex composed of NAA11 and NAA15. Interacts with HIF1A.

It is found in the cytoplasm. The protein localises to the nucleus. It catalyses the reaction N-terminal glycyl-[protein] + acetyl-CoA = N-terminal N(alpha)-acetylglycyl-[protein] + CoA + H(+). The enzyme catalyses N-terminal L-alanyl-[protein] + acetyl-CoA = N-terminal N(alpha)-acetyl-L-alanyl-[protein] + CoA + H(+). It carries out the reaction N-terminal L-seryl-[protein] + acetyl-CoA = N-terminal N(alpha)-acetyl-L-seryl-[protein] + CoA + H(+). The catalysed reaction is N-terminal L-valyl-[protein] + acetyl-CoA = N-terminal N(alpha)-acetyl-L-valyl-[protein] + CoA + H(+). It catalyses the reaction N-terminal L-cysteinyl-[protein] + acetyl-CoA = N-terminal N(alpha)-acetyl-L-cysteinyl-[protein] + CoA + H(+). The enzyme catalyses N-terminal L-threonyl-[protein] + acetyl-CoA = N-terminal N(alpha)-acetyl-L-threonyl-[protein] + CoA + H(+). In terms of biological role, displays alpha (N-terminal) acetyltransferase activity. Proposed alternative catalytic subunit of the N-terminal acetyltransferase A (NatA) complex. This is N-alpha-acetyltransferase 11 (Naa11) from Mus musculus (Mouse).